The primary structure comprises 748 residues: MTDTSDARPPHSDAKTASNSESENPAIDSPEPKSHAPLTNRDWWPEQVDVSVLHKQNEKGNPFGEDFDYAAEFAKLDVDAFKADVIDLIRTSQDWWPADYGNYAGLFVRMSWHAAGTYRIFDGRGGAGQGSQRFAPLNSWPDNANLDKARRLLWPIKQKYGNKISWADLIAYAGNAALEQSGFKTAGFAFGREDIWEPEEMLWGQEDTWLGTDKRYGGSNDDKRELAEPFGATTMGLIYVNPEGPEGKPDPLAAAHDIRETFGRMAMNDEETAALIVGGHTLGKTHGAADVNVGPEPEGAPMEQQGLGWKCPFGTGNGNDTVTSGLEVIWTGTNSQWSNAFLENLYGNEWELTKSPAGAWQFEAKNAEATIPDPFGGPPRKPTMLVTDVAMREDPIYGQITRRWLDHPEEMDAAFAKAWFKLMHRDMGPVSRYLGPWVPAEQEIWQDPVPAVDHALIDESDIAALKSQVLQSGLSVPQLVKTAWASAASFRGTDKRGGANGARLRLEPQRNWEANEPAELDKVLPVLEKIQQDFNSTATGGKKVSLADVIVLAGSAAVEKAAKDGGYEITVHFAPGRTDATQESTDVESFAVLEPRTDGFRNFFRPGDKNPLEQQLVERAYLLDLTAPELTALIGGLRALGANHGGSKHGVFTDKPGVLSNDFFLNLLDMRTEWKPSELSENVFDGKDRATGETKWTATANDLVFGSNSVLRALAEVYAQDDNQGKFVEDFVAAWVKVMNNDRFDLKQ.

Basic and acidic residues predominate over residues 1–14 (MTDTSDARPPHSDA). A disordered region spans residues 1–40 (MTDTSDARPPHSDAKTASNSESENPAIDSPEPKSHAPLTN). A cross-link (tryptophyl-tyrosyl-methioninium (Trp-Tyr) (with M-265)) is located at residues 112-239 (WHAAGTYRIF…FGATTMGLIY (128 aa)). His113 functions as the Proton acceptor in the catalytic mechanism. The segment at residues 239 to 265 (YVNPEGPEGKPDPLAAAHDIRETFGRM) is a cross-link (tryptophyl-tyrosyl-methioninium (Tyr-Met) (with W-112)). His280 contributes to the heme b binding site.

The protein belongs to the peroxidase family. Peroxidase/catalase subfamily. Homodimer or homotetramer. Heme b serves as cofactor. Formation of the three residue Trp-Tyr-Met cross-link is important for the catalase, but not the peroxidase activity of the enzyme.

The catalysed reaction is H2O2 + AH2 = A + 2 H2O. It catalyses the reaction 2 H2O2 = O2 + 2 H2O. In terms of biological role, bifunctional enzyme with both catalase and broad-spectrum peroxidase activity. The sequence is that of Catalase-peroxidase from Mycolicibacterium gilvum (strain PYR-GCK) (Mycobacterium gilvum (strain PYR-GCK)).